The following is a 374-amino-acid chain: Anhydro-N-acetylmuramic acid kinase (374 aa).

Residue glycine 12–aspartate 19 coordinates ATP.

The protein belongs to the anhydro-N-acetylmuramic acid kinase family.

It carries out the reaction 1,6-anhydro-N-acetyl-beta-muramate + ATP + H2O = N-acetyl-D-muramate 6-phosphate + ADP + H(+). It participates in amino-sugar metabolism; 1,6-anhydro-N-acetylmuramate degradation. Its pathway is cell wall biogenesis; peptidoglycan recycling. Functionally, catalyzes the specific phosphorylation of 1,6-anhydro-N-acetylmuramic acid (anhMurNAc) with the simultaneous cleavage of the 1,6-anhydro ring, generating MurNAc-6-P. Is required for the utilization of anhMurNAc either imported from the medium or derived from its own cell wall murein, and thus plays a role in cell wall recycling. The sequence is that of Anhydro-N-acetylmuramic acid kinase from Klebsiella pneumoniae subsp. pneumoniae (strain ATCC 700721 / MGH 78578).